The following is a 477-amino-acid chain: Iroquois homeobox protein 6a (477 aa).

The homeobox DNA-binding region spans 148-210; the sequence is GSTRRKNATR…NARRRLKKEN (63 aa). Disordered stretches follow at residues 209–282 and 303–323; these read ENKM…PDIP and DYLD…QSTS. Over residues 219–237 the composition is skewed to basic and acidic residues; the sequence is KAGDDRKEDLDSKDSKDEQ. Residues 243 to 253 are compositionally biased toward acidic residues; it reads DLDDMEDEDCD. The span at 254 to 264 shows a compositional bias: basic and acidic residues; it reads KLDSDCEKSGQ. Residues 310 to 321 are compositionally biased toward low complexity; sequence SKPQQQQPSPQS.

Belongs to the TALE/IRO homeobox family.

The protein resides in the nucleus. Its function is as follows. Transcription factor. Binds to the iroquois binding site (IBS) motif of target genes to regulate gene expression; functions as a transcriptional activator or repressor. In concert with irx5a, plays a role in visual performance. The sequence is that of Iroquois homeobox protein 6a from Danio rerio (Zebrafish).